Here is a 145-residue protein sequence, read N- to C-terminus: METVFDYNQIKEIIPHRQPFLLIDRVVEYEEGQRCVAIKQVSGNEPFFQGHFPDYAVMPGVLITEALAQTGAVALLNSEQNKGKIALFAGIDKCRFKRQVTPGDTLTLEVEITKMRGPIGKGTAKATVDGQLACSCELTFAIQDV.

His-51 is an active-site residue.

Belongs to the thioester dehydratase family. FabZ subfamily.

The protein localises to the cytoplasm. The catalysed reaction is a (3R)-hydroxyacyl-[ACP] = a (2E)-enoyl-[ACP] + H2O. Functionally, involved in unsaturated fatty acids biosynthesis. Catalyzes the dehydration of short chain beta-hydroxyacyl-ACPs and long chain saturated and unsaturated beta-hydroxyacyl-ACPs. The polypeptide is 3-hydroxyacyl-[acyl-carrier-protein] dehydratase FabZ (Staphylococcus carnosus (strain TM300)).